The following is an 83-amino-acid chain: UPF0147 protein TK2131 (83 aa).

Belongs to the UPF0147 family.

The protein is UPF0147 protein TK2131 of Thermococcus kodakarensis (strain ATCC BAA-918 / JCM 12380 / KOD1) (Pyrococcus kodakaraensis (strain KOD1)).